The sequence spans 184 residues: Nucleoside triphosphate pyrophosphatase (184 aa).

Asp-71 serves as the catalytic Proton acceptor.

The protein belongs to the Maf family. Requires a divalent metal cation as cofactor.

The protein resides in the cytoplasm. The catalysed reaction is a ribonucleoside 5'-triphosphate + H2O = a ribonucleoside 5'-phosphate + diphosphate + H(+). The enzyme catalyses a 2'-deoxyribonucleoside 5'-triphosphate + H2O = a 2'-deoxyribonucleoside 5'-phosphate + diphosphate + H(+). Its function is as follows. Nucleoside triphosphate pyrophosphatase. May have a dual role in cell division arrest and in preventing the incorporation of modified nucleotides into cellular nucleic acids. The protein is Nucleoside triphosphate pyrophosphatase of Synechococcus sp. (strain CC9605).